The primary structure comprises 363 residues: MNKRKILVPLGNKSYEVTIEAGILNNISEELLKIGITKNRKILVISNEEISNFYGEKFLNDLKDNKFQVQMFLIKAGESYKNLKTLSEIYDVAFEFGLDRNSIIIALGGGIVGDVSGFAAATWLRGIEYIQIPTTLLSMVDSSVGGKTGVNHPKGKNLIGAFNQPKAVFIDPETLKSLPKREFSAGMAEVIKYGVIRDKELFEYLEIEKNKNELINLKNEYLIKIINSSIKTKSYIVSQDEHENGVRAILNYGHSFGHVIENLCGYGKFLHGEAISIGMNIAGEIAIDKGLWSKEELERQKNLLKSYDLPTEIPKINKEDVLTILMGDKKVRNGKMRFILPKEIGVVDIYDDVEDALFLKFFS.

NAD(+) is bound by residues 134 to 135 (TT), Lys-147, and Lys-156. 3 residues coordinate Zn(2+): Glu-189, His-254, and His-271.

Belongs to the sugar phosphate cyclases superfamily. Dehydroquinate synthase family. The cofactor is Co(2+). It depends on Zn(2+) as a cofactor. NAD(+) serves as cofactor.

It is found in the cytoplasm. The enzyme catalyses 7-phospho-2-dehydro-3-deoxy-D-arabino-heptonate = 3-dehydroquinate + phosphate. The protein operates within metabolic intermediate biosynthesis; chorismate biosynthesis; chorismate from D-erythrose 4-phosphate and phosphoenolpyruvate: step 2/7. Functionally, catalyzes the conversion of 3-deoxy-D-arabino-heptulosonate 7-phosphate (DAHP) to dehydroquinate (DHQ). This is 3-dehydroquinate synthase from Prochlorococcus marinus (strain MIT 9312).